We begin with the raw amino-acid sequence, 99 residues long: DNA-binding protein HU (99 aa).

Residues 67–86 (REGRNPKTGAKMKIDAYNQP) form a disordered region.

The protein belongs to the bacterial histone-like protein family. In terms of assembly, homodimer.

Its function is as follows. Histone-like DNA-binding protein which is capable of wrapping DNA to stabilize it, and thus to prevent its denaturation under extreme environmental conditions. The sequence is that of DNA-binding protein HU (hup) from Rickettsia conorii (strain ATCC VR-613 / Malish 7).